The following is a 235-amino-acid chain: MKLTWLGHAAFRIETAKAVILIDPFLNGNPGAKGIDFKEATKGVTHIALTHGHGDHVGDTVAIAREHGAIVIANADLASWLGSQGVEKLDPGNTGGTVTHDGFTITFVNALHSSAMLTENGVSQALGNPNGLVFHFEDAPTLYHMGDTDIFSDMGLINELHQPEIGIVPIGDRFTMGGAVAALACQRYFNFKTVLPCHYASFPIIDQTADKFLAGMADHRETKVIADPAGTVHSF.

It belongs to the UPF0173 family.

The protein is UPF0173 metal-dependent hydrolase Oant_3663 of Brucella anthropi (strain ATCC 49188 / DSM 6882 / CCUG 24695 / JCM 21032 / LMG 3331 / NBRC 15819 / NCTC 12168 / Alc 37) (Ochrobactrum anthropi).